We begin with the raw amino-acid sequence, 313 residues long: tRNA dimethylallyltransferase (313 aa).

Residue 13–20 (GPTASGKT) participates in ATP binding. 15–20 (TASGKT) serves as a coordination point for substrate. Interaction with substrate tRNA stretches follow at residues 38-41 (DSAL), 162-166 (QRLSR), 243-248 (RCVGYR), and 276-283 (KRQITWLR).

This sequence belongs to the IPP transferase family. In terms of assembly, monomer. It depends on Mg(2+) as a cofactor.

It carries out the reaction adenosine(37) in tRNA + dimethylallyl diphosphate = N(6)-dimethylallyladenosine(37) in tRNA + diphosphate. In terms of biological role, catalyzes the transfer of a dimethylallyl group onto the adenine at position 37 in tRNAs that read codons beginning with uridine, leading to the formation of N6-(dimethylallyl)adenosine (i(6)A). The protein is tRNA dimethylallyltransferase of Aliivibrio salmonicida (strain LFI1238) (Vibrio salmonicida (strain LFI1238)).